The following is a 309-amino-acid chain: Aspartate carbamoyltransferase catalytic subunit (309 aa).

Arginine 58 and threonine 59 together coordinate carbamoyl phosphate. Lysine 86 contacts L-aspartate. Positions 108, 136, and 139 each coordinate carbamoyl phosphate. The L-aspartate site is built by arginine 170 and arginine 224. Residues glycine 266 and proline 267 each coordinate carbamoyl phosphate.

It belongs to the aspartate/ornithine carbamoyltransferase superfamily. ATCase family. As to quaternary structure, heterododecamer (2C3:3R2) of six catalytic PyrB chains organized as two trimers (C3), and six regulatory PyrI chains organized as three dimers (R2).

It catalyses the reaction carbamoyl phosphate + L-aspartate = N-carbamoyl-L-aspartate + phosphate + H(+). It participates in pyrimidine metabolism; UMP biosynthesis via de novo pathway; (S)-dihydroorotate from bicarbonate: step 2/3. In terms of biological role, catalyzes the condensation of carbamoyl phosphate and aspartate to form carbamoyl aspartate and inorganic phosphate, the committed step in the de novo pyrimidine nucleotide biosynthesis pathway. This chain is Aspartate carbamoyltransferase catalytic subunit, found in Campylobacter curvus (strain 525.92).